A 196-amino-acid polypeptide reads, in one-letter code: Glycerol-3-phosphate acyltransferase (196 aa).

The next 4 membrane-spanning stretches (helical) occupy residues 5-25 (GLIAFAFGYLLGSIPFGMILT), 70-90 (VVIALLLSGPGAAMAATLGAF), 111-131 (IGVLLGLFWPAALAFCAIWLL), and 152-172 (LLLWGFGHPQFALLFAVLTVL).

This sequence belongs to the PlsY family. In terms of assembly, probably interacts with PlsX.

Its subcellular location is the cell inner membrane. It catalyses the reaction an acyl phosphate + sn-glycerol 3-phosphate = a 1-acyl-sn-glycero-3-phosphate + phosphate. It participates in lipid metabolism; phospholipid metabolism. Functionally, catalyzes the transfer of an acyl group from acyl-phosphate (acyl-PO(4)) to glycerol-3-phosphate (G3P) to form lysophosphatidic acid (LPA). This enzyme utilizes acyl-phosphate as fatty acyl donor, but not acyl-CoA or acyl-ACP. This chain is Glycerol-3-phosphate acyltransferase, found in Nitrobacter winogradskyi (strain ATCC 25391 / DSM 10237 / CIP 104748 / NCIMB 11846 / Nb-255).